The primary structure comprises 203 residues: MNKIVIASNNAGKLAEISRLLAPLGIEVVTQSSLGVTEADEPHMTFVENALAKARHASLATGLPALADDSGICVSALRGDPGVFSARYAGEPRSDERNNRKLVEALHGQSDRRAYYYCVIVLLRHGQDPQPVIIEDTWRGEIIAEPIGQGGFGYDPHFFLPELGKTAAELSIEEKNRISHRGKALARLVQMLSENETVPVVPV.

8-13 (SNNAGK) is a substrate binding site. Asp40 and Asp69 together coordinate Mg(2+). Residue Asp69 is the Proton acceptor of the active site. Residues Ser70, 152 to 155 (FGYD), Lys175, and 180 to 181 (HR) each bind substrate.

The protein belongs to the HAM1 NTPase family. As to quaternary structure, homodimer. Mg(2+) serves as cofactor.

The catalysed reaction is XTP + H2O = XMP + diphosphate + H(+). The enzyme catalyses dITP + H2O = dIMP + diphosphate + H(+). It carries out the reaction ITP + H2O = IMP + diphosphate + H(+). In terms of biological role, pyrophosphatase that catalyzes the hydrolysis of nucleoside triphosphates to their monophosphate derivatives, with a high preference for the non-canonical purine nucleotides XTP (xanthosine triphosphate), dITP (deoxyinosine triphosphate) and ITP. Seems to function as a house-cleaning enzyme that removes non-canonical purine nucleotides from the nucleotide pool, thus preventing their incorporation into DNA/RNA and avoiding chromosomal lesions. The protein is dITP/XTP pyrophosphatase of Nitrosomonas europaea (strain ATCC 19718 / CIP 103999 / KCTC 2705 / NBRC 14298).